The primary structure comprises 43 residues: Potassium channel toxin gamma-KTx 4.6 (43 aa).

4 disulfide bridges follow: C5-C23, C11-C34, C20-C39, and C24-C41.

The protein belongs to the ergtoxin family. Gamma-KTx 4 subfamily. In terms of tissue distribution, expressed by the venom gland.

Its subcellular location is the secreted. Functionally, reversibly blocks Kv11/ERG potassium channels. The polypeptide is Potassium channel toxin gamma-KTx 4.6 (Centruroides limpidus (Mexican scorpion)).